Reading from the N-terminus, the 428-residue chain is Tyrosine--tRNA ligase (428 aa).

Tyr37 serves as a coordination point for L-tyrosine. The 'HIGH' region signature appears at 42–51 (PTGSSLHAGH). L-tyrosine contacts are provided by Tyr175 and Gln179. A 'KMSKS' region motif is present at residues 235–239 (KFGKS). Residue Lys238 participates in ATP binding. The S4 RNA-binding domain occupies 358–415 (ATILDLLVESGLEKSKGAARRTVGEGGAYVNNQRIEDIEWSPSAEELLHGSWLVLRKG).

It belongs to the class-I aminoacyl-tRNA synthetase family. TyrS type 1 subfamily. As to quaternary structure, homodimer.

Its subcellular location is the cytoplasm. The catalysed reaction is tRNA(Tyr) + L-tyrosine + ATP = L-tyrosyl-tRNA(Tyr) + AMP + diphosphate + H(+). Its function is as follows. Catalyzes the attachment of tyrosine to tRNA(Tyr) in a two-step reaction: tyrosine is first activated by ATP to form Tyr-AMP and then transferred to the acceptor end of tRNA(Tyr). The sequence is that of Tyrosine--tRNA ligase from Corynebacterium jeikeium (strain K411).